The following is a 318-amino-acid chain: MIQPMASPSNSSTVPVSEFLLICFPNFQSWQHWLSLPLSLLFLLAMGANTTLLITIQLEASLHQPLYYLLSLLSLLDIVLCLTVIPKVLAIFWYDLRSISFPACFLQMFIMNSFLPMESCTFMVMAYDRYVAICHPLRYPSIITNQFVAKASVFIVVRNALLTAPIPILTSLLHYCGENVIENCICANLSVSRLSCDNFTLNRIYQFVAGWTLLGSDLFLIFLSYTFILRAVLRFKAEGAAVKALSTCGSHFILILFFSTILLVVVLTNVARKKVPMDILILLNVLHHLIPPALNPIVYGVRTKEIKQGIQKLLQRGR.

Residues Met-1–His-32 are Extracellular-facing. A glycan (N-linked (GlcNAc...) asparagine) is linked at Asn-10. The helical transmembrane segment at Trp-33–Leu-53 threads the bilayer. At Ile-54–Ser-61 the chain is on the cytoplasmic side. A helical transmembrane segment spans residues Leu-62–Leu-82. Topologically, residues Thr-83–Leu-106 are extracellular. Cys-104 and Cys-196 form a disulfide bridge. The helical transmembrane segment at Gln-107–Tyr-127 threads the bilayer. Residues Asp-128–Gln-146 lie on the Cytoplasmic side of the membrane. Residues Phe-147–Pro-167 form a helical membrane-spanning segment. Over Ile-168 to Arg-203 the chain is Extracellular. 2 N-linked (GlcNAc...) asparagine glycosylation sites follow: Asn-188 and Asn-198. Residues Ile-204–Ser-224 form a helical membrane-spanning segment. Residues Tyr-225–Ala-244 lie on the Cytoplasmic side of the membrane. Residues Leu-245–Val-265 traverse the membrane as a helical segment. Over Val-266–Leu-280 the chain is Extracellular. Residues Ile-281–Val-301 form a helical membrane-spanning segment. At Arg-302–Arg-318 the chain is on the cytoplasmic side.

It belongs to the G-protein coupled receptor 1 family.

The protein localises to the cell membrane. Functionally, odorant receptor. The protein is Olfactory receptor 56A1 (OR56A1) of Homo sapiens (Human).